Consider the following 704-residue polypeptide: Neutral ceramidase (704 aa).

Residues 1 to 23 (MAISKIAFLALIALSGLCGLASA) form the signal peptide. N-linked (GlcNAc...) asparagine glycosylation occurs at asparagine 230. Serine 276 serves as the catalytic Nucleophile. Residues asparagine 362, asparagine 550, and asparagine 598 are each glycosylated (N-linked (GlcNAc...) asparagine).

The protein belongs to the neutral ceramidase family. N-glycosylated.

The protein resides in the secreted. The enzyme catalyses an N-acylsphing-4-enine + H2O = sphing-4-enine + a fatty acid. Hydrolyzes the sphingolipid ceramide into sphingosine and free fatty acid at an optimal pH of 6.5-7.5. Acts as a key regulator of sphingolipid signaling metabolites by generating sphingosine at the cell surface. In Drosophila pseudoobscura pseudoobscura (Fruit fly), this protein is Neutral ceramidase (CDase).